The following is a 284-amino-acid chain: Phosphonates import ATP-binding protein PhnC 1 (284 aa).

The region spanning 5-253 (IEVRGLSKSF…MLRDLYGSEA (249 aa)) is the ABC transporter domain. 38–45 (GASGSGKS) serves as a coordination point for ATP.

It belongs to the ABC transporter superfamily. Phosphonates importer (TC 3.A.1.9.1) family. As to quaternary structure, the complex is composed of two ATP-binding proteins (PhnC), two transmembrane proteins (PhnE) and a solute-binding protein (PhnD).

It localises to the cell inner membrane. The enzyme catalyses phosphonate(out) + ATP + H2O = phosphonate(in) + ADP + phosphate + H(+). Its function is as follows. Part of the ABC transporter complex PhnCDE involved in phosphonates import. Responsible for energy coupling to the transport system. The protein is Phosphonates import ATP-binding protein PhnC 1 of Cupriavidus metallidurans (strain ATCC 43123 / DSM 2839 / NBRC 102507 / CH34) (Ralstonia metallidurans).